A 346-amino-acid polypeptide reads, in one-letter code: Small ribosomal subunit biogenesis GTPase RsgA 2 (346 aa).

A CP-type G domain is found at 93 to 248; it reads EEQLIAANFD…VIDTPGMREF (156 aa). GTP-binding positions include 138-141 and 190-198; these read TKAD and GSSGVGKSS. 4 residues coordinate Zn(2+): Cys-271, Cys-276, His-278, and Cys-284.

Belongs to the TRAFAC class YlqF/YawG GTPase family. RsgA subfamily. Monomer. Associates with 30S ribosomal subunit, binds 16S rRNA. It depends on Zn(2+) as a cofactor.

It is found in the cytoplasm. In terms of biological role, one of several proteins that assist in the late maturation steps of the functional core of the 30S ribosomal subunit. Helps release RbfA from mature subunits. May play a role in the assembly of ribosomal proteins into the subunit. Circularly permuted GTPase that catalyzes slow GTP hydrolysis, GTPase activity is stimulated by the 30S ribosomal subunit. This Listeria monocytogenes serotype 4b (strain F2365) protein is Small ribosomal subunit biogenesis GTPase RsgA 2.